Consider the following 537-residue polypeptide: 5,6-dihydroxyindole-2-carboxylic acid oxidase (537 aa).

The N-terminal stretch at 1–24 is a signal peptide; the sequence is MKSPTLLSLGYMFLVLLFFQQAWA. The Lumenal, melanosome portion of the chain corresponds to 25 to 477; that stretch reads QFPRECATIE…WPSRSFSISE (453 aa). 5 cysteine pairs are disulfide-bonded: Cys30–Cys41, Cys42–Cys65, Cys56–Cys99, Cys101–Cys110, and Cys113–Cys122. 2 N-linked (GlcNAc...) asparagine glycosylation sites follow: Asn96 and Asn104. Asn181 carries N-linked (GlcNAc...) asparagine glycosylation. Zn(2+) contacts are provided by His192, His215, and His224. 2 disulfides stabilise this stretch: Cys258/Cys261 and Cys290/Cys303. 2 N-linked (GlcNAc...) asparagine glycosylation sites follow: Asn304 and Asn350. The Zn(2+) site is built by His377 and His381. N-linked (GlcNAc...) asparagine glycosylation is present at Asn385. Zn(2+) is bound at residue His404. The chain crosses the membrane as a helical span at residues 478 to 501; that stretch reads IVTIAVVAALSLVAVIFAGASCLI. Topologically, residues 502–537 are cytoplasmic; the sequence is RARSNMDEANQPLLTDQYQHYIEEYEKIHNPNQSVV.

This sequence belongs to the tyrosinase family. In terms of assembly, monomer. Interacts with ATP7A. Interacts with SLC45A2. Cu(2+) serves as cofactor. The cofactor is Zn(2+). Glycosylated.

Its subcellular location is the melanosome membrane. The catalysed reaction is 2 5,6-dihydroxyindole-2-carboxylate + O2 = 2 indole-5,6-quinone-2-carboxylate + 2 H2O. It functions in the pathway pigment biosynthesis; melanin biosynthesis. Functionally, plays a role in melanin biosynthesis. Catalyzes the oxidation of 5,6-dihydroxyindole-2-carboxylic acid (DHICA) into indole-5,6-quinone-2-carboxylic acid. May regulate or influence the type of melanin synthesized. Also to a lower extent, capable of hydroxylating tyrosine and producing melanin. The protein is 5,6-dihydroxyindole-2-carboxylic acid oxidase (TYRP1) of Bos taurus (Bovine).